The following is a 184-amino-acid chain: Isopentenyl-diphosphate Delta-isomerase (184 aa).

Residues H25 and H32 each coordinate Mn(2+). One can recognise a Nudix hydrolase domain in the interval P30 to L164. C67 is a catalytic residue. H69 contacts Mn(2+). Position 87 (E87) interacts with Mg(2+). Mn(2+) is bound by residues E114 and E116. The active site involves E116.

It belongs to the IPP isomerase type 1 family. As to quaternary structure, homodimer. Requires Mg(2+) as cofactor. The cofactor is Mn(2+).

It is found in the cytoplasm. The enzyme catalyses isopentenyl diphosphate = dimethylallyl diphosphate. The protein operates within isoprenoid biosynthesis; dimethylallyl diphosphate biosynthesis; dimethylallyl diphosphate from isopentenyl diphosphate: step 1/1. Functionally, catalyzes the 1,3-allylic rearrangement of the homoallylic substrate isopentenyl (IPP) to its highly electrophilic allylic isomer, dimethylallyl diphosphate (DMAPP). This Klebsiella pneumoniae subsp. pneumoniae (strain ATCC 700721 / MGH 78578) protein is Isopentenyl-diphosphate Delta-isomerase.